A 237-amino-acid chain; its full sequence is Concanavalin-A (237 aa).

2 residues coordinate Mn(2+): glutamate 8 and aspartate 10. The Ca(2+) site is built by aspartate 10, tyrosine 12, asparagine 14, and aspartate 19. Residue tyrosine 12 coordinates a carbohydrate. 2 residues coordinate Mn(2+): aspartate 19 and histidine 24. Residue 99 to 100 (LY) participates in a carbohydrate binding. Aspartate 208 contributes to the Ca(2+) binding site. Arginine 228 contacts a carbohydrate.

This sequence belongs to the leguminous lectin family. As to quaternary structure, homotetramer.

Functionally, glucose/D-mannose specific lectin. The chain is Concanavalin-A from Canavalia lineata (Beach bean).